Consider the following 406-residue polypeptide: Phosphopentomutase (406 aa).

6 residues coordinate Mn(2+): Asp-10, Asp-305, His-310, Asp-346, His-347, and His-358.

The protein belongs to the phosphopentomutase family. Mn(2+) serves as cofactor.

It localises to the cytoplasm. The catalysed reaction is 2-deoxy-alpha-D-ribose 1-phosphate = 2-deoxy-D-ribose 5-phosphate. The enzyme catalyses alpha-D-ribose 1-phosphate = D-ribose 5-phosphate. It functions in the pathway carbohydrate degradation; 2-deoxy-D-ribose 1-phosphate degradation; D-glyceraldehyde 3-phosphate and acetaldehyde from 2-deoxy-alpha-D-ribose 1-phosphate: step 1/2. Its function is as follows. Isomerase that catalyzes the conversion of deoxy-ribose 1-phosphate (dRib-1-P) and ribose 1-phosphate (Rib-1-P) to deoxy-ribose 5-phosphate (dRib-5-P) and ribose 5-phosphate (Rib-5-P), respectively. The protein is Phosphopentomutase of Aliivibrio salmonicida (strain LFI1238) (Vibrio salmonicida (strain LFI1238)).